The chain runs to 173 residues: Bifunctional protein PyrR (173 aa).

Positions 93-105 (IILVDDVLYTGRT) match the PRPP-binding motif.

This sequence belongs to the purine/pyrimidine phosphoribosyltransferase family. PyrR subfamily. As to quaternary structure, homodimer and homohexamer; in equilibrium.

The enzyme catalyses UMP + diphosphate = 5-phospho-alpha-D-ribose 1-diphosphate + uracil. Functionally, regulates transcriptional attenuation of the pyrimidine nucleotide (pyr) operon by binding in a uridine-dependent manner to specific sites on pyr mRNA. This disrupts an antiterminator hairpin in the RNA and favors formation of a downstream transcription terminator, leading to a reduced expression of downstream genes. Its function is as follows. Also displays a weak uracil phosphoribosyltransferase activity which is not physiologically significant. This Streptococcus equi subsp. zooepidemicus (strain MGCS10565) protein is Bifunctional protein PyrR.